Here is a 247-residue protein sequence, read N- to C-terminus: Hydroxyacylglutathione hydrolase 1 (247 aa).

7 residues coordinate Zn(2+): histidine 54, histidine 56, aspartate 58, histidine 59, histidine 111, aspartate 128, and histidine 165.

This sequence belongs to the metallo-beta-lactamase superfamily. Glyoxalase II family. In terms of assembly, monomer. The cofactor is Zn(2+).

The enzyme catalyses an S-(2-hydroxyacyl)glutathione + H2O = a 2-hydroxy carboxylate + glutathione + H(+). Its pathway is secondary metabolite metabolism; methylglyoxal degradation; (R)-lactate from methylglyoxal: step 2/2. Functionally, thiolesterase that catalyzes the hydrolysis of S-D-lactoyl-glutathione to form glutathione and D-lactic acid. This Vibrio vulnificus (strain YJ016) protein is Hydroxyacylglutathione hydrolase 1.